A 344-amino-acid chain; its full sequence is Heat-inducible transcription repressor HrcA (344 aa).

This sequence belongs to the HrcA family.

Its function is as follows. Negative regulator of class I heat shock genes (grpE-dnaK-dnaJ and groELS operons). Prevents heat-shock induction of these operons. This is Heat-inducible transcription repressor HrcA from Streptococcus equi subsp. zooepidemicus (strain MGCS10565).